Reading from the N-terminus, the 303-residue chain is Catechol 1,2-dioxygenase (303 aa).

Residues Tyr156, Tyr191, His215, and His217 each coordinate Fe cation.

In terms of assembly, homodimer. It depends on Fe(3+) as a cofactor.

The catalysed reaction is catechol + O2 = cis,cis-muconate + 2 H(+). It participates in aromatic compound metabolism; beta-ketoadipate pathway; 5-oxo-4,5-dihydro-2-furylacetate from catechol: step 1/3. With respect to regulation, inhibited by Ag(+), Cu(+), Hg(2+) and Pb(2+). Its function is as follows. Can cleave 4-methylcatechol at lower rates than catechol, but has no activity with 3-methylcatechol, 4-chlorocatechol, 4-carboxycatechol or hydroxyquinol. In Candida albicans (strain SC5314 / ATCC MYA-2876) (Yeast), this protein is Catechol 1,2-dioxygenase (HQD2).